The following is a 185-amino-acid chain: Peptidoglycan-recognition protein SC1a/b (185 aa).

A signal peptide spans 1–21 (MVSKVALLLAVLVCSQYMAQG). The N-acetylmuramoyl-L-alanine amidase domain occupies 46–170 (SYAIIHHTAG…RQVSATECPG (125 aa)). Zn(2+) is bound at residue His51. Cys58 and Cys64 are oxidised to a cystine. Residues His160 and Cys168 each coordinate Zn(2+).

The protein belongs to the N-acetylmuramoyl-L-alanine amidase 2 family. Zn(2+) serves as cofactor.

The protein localises to the secreted. The catalysed reaction is Hydrolyzes the link between N-acetylmuramoyl residues and L-amino acid residues in certain cell-wall glycopeptides.. Functionally, N-acetylmuramyl-L-alanine amidase involved in innate immunity by degrading bacterial peptidoglycans (PGN). Plays a scavenger role by digesting biologically active PGN into biologically inactive fragments. Has no direct bacteriolytic activity. The sequence is that of Peptidoglycan-recognition protein SC1a/b (PGRP-SC1a) from Drosophila simulans (Fruit fly).